Consider the following 106-residue polypeptide: Replication restart protein PriB (106 aa).

The SSB domain occupies 4-103 (TNRLVLSGTV…LHAEQIEFID (100 aa)).

Belongs to the PriB family. As to quaternary structure, homodimer. Interacts with PriA and DnaT. Component of the replication restart primosome. Primosome assembly occurs via a 'hand-off' mechanism. PriA binds to replication forks, subsequently PriB then DnaT bind; DnaT then displaces ssDNA to generate the helicase loading substrate.

Involved in the restart of stalled replication forks, which reloads the replicative helicase on sites other than the origin of replication; the PriA-PriB pathway is the major replication restart pathway. During primosome assembly it facilitates complex formation between PriA and DnaT on DNA; stabilizes PriA on DNA. Stimulates the DNA unwinding activity of PriA helicase. The chain is Replication restart protein PriB from Yersinia enterocolitica serotype O:8 / biotype 1B (strain NCTC 13174 / 8081).